The sequence spans 143 residues: Large ribosomal subunit protein uL15 (143 aa).

Residues 1 to 56 (MELNSIKPAEGSKHAKRRVGRGIGSGLGKTAGRGHKGQKSRSGGYHKVGFEGGQMP) form a disordered region. Residues 21 to 31 (RGIGSGLGKTA) show a composition bias toward gly residues.

The protein belongs to the universal ribosomal protein uL15 family. As to quaternary structure, part of the 50S ribosomal subunit.

Binds to the 23S rRNA. The polypeptide is Large ribosomal subunit protein uL15 (Delftia acidovorans (strain DSM 14801 / SPH-1)).